Reading from the N-terminus, the 305-residue chain is Homoserine O-acetyltransferase (305 aa).

The active-site Acyl-thioester intermediate is Cys-142. 2 residues coordinate substrate: Lys-163 and Ser-192. The active-site Proton acceptor is the His-235. The active site involves Glu-237. Arg-249 contacts substrate.

The protein belongs to the MetA family.

It localises to the cytoplasm. It carries out the reaction L-homoserine + acetyl-CoA = O-acetyl-L-homoserine + CoA. It participates in amino-acid biosynthesis; L-methionine biosynthesis via de novo pathway; O-acetyl-L-homoserine from L-homoserine: step 1/1. In terms of biological role, transfers an acetyl group from acetyl-CoA to L-homoserine, forming acetyl-L-homoserine. This is Homoserine O-acetyltransferase from Dinoroseobacter shibae (strain DSM 16493 / NCIMB 14021 / DFL 12).